The chain runs to 75 residues: Veswaprin-c (75 aa).

The first 24 residues, 1–24 (MSSGGLLLLLGLLTLWAELTPVSS), serve as a signal peptide directing secretion. Residues 27–72 (RPKKPGLCPPRPQKPPCVRECKNDWRCPGERKCCRYGCIYECRDPI) enclose the WAP domain. Intrachain disulfides connect cysteine 34–cysteine 60, cysteine 43–cysteine 64, cysteine 47–cysteine 59, and cysteine 53–cysteine 68.

Belongs to the venom waprin family. As to expression, expressed by the venom gland.

The protein localises to the secreted. In terms of biological role, damages membranes of susceptible bacteria. Has no hemolytic activity. Not toxic to mice. Does not inhibit the proteinases elastase and cathepsin G. The chain is Veswaprin-c from Demansia vestigiata (Lesser black whip snake).